Reading from the N-terminus, the 551-residue chain is MQTYQGIIVDAIYRRKFKGEIAVEHGKIISIEEKEHDIEQYILPGLVDAHVHIESSMTVPSVFARMAVARGTVAVVSDPHEIANVMGEEGIDYMLEDARKAPLKVFFGVPSCVPATPFESAGAVLDAEAVDRLLAREDLHYLSEMMNFPGVVMEFPEVIAKLESAKKYGKNIDGHAPGLNGTDLQKYVGAGISTDHESFAYEEAVEKIKLGMNILIREGSSARNFDTLYKLIDEYPESVMLCTDDSHPDTLIYEGHIDKLLRRGQEKGLDIYNLIRAAVINPVEHYGLNVGLLREGDPADFIIVDDLKAFNVLKTFIDGSCVYNDGKVLFSVEQAPAKNVFNRNKISVDDVKLAMPASGNNGEQMKKIRVIVAQDGELVTGQELALPKVENGNLISDPARDILKMVVLSRYADDPVQIGFIKNIGLKKGAIASSIAHDSHNIIAVGATDEDIVGAVNRLVENRGGIVVGTADNLIDLPLEVSGLMSTLDGKEVAVRYEQLNEEARKLGTSLMSPFMTLSFMSLLVIPELKLGDKGLFDVTKFEFVELFAGE.

The protein belongs to the metallo-dependent hydrolases superfamily. Adenine deaminase family. Mn(2+) serves as cofactor.

It carries out the reaction adenine + H2O + H(+) = hypoxanthine + NH4(+). The sequence is that of Adenine deaminase from Methanosarcina barkeri (strain Fusaro / DSM 804).